Here is a 193-residue protein sequence, read N- to C-terminus: Ion-translocating oxidoreductase complex subunit A (193 aa).

Transmembrane regions (helical) follow at residues 5-25 (LLLFVGTVLVNNFVLVKFLGL), 47-67 (FVMTLASICAWLIDTWILIPL), 72-92 (LRTMAFILVIAVVVQFTEMVV), 102-122 (LLGIFLPLITTNCAVLGVALL), 134-154 (ALYGFSAAVGFSLVMVLFAAI), and 171-191 (AIALITAGLMSLAFMGFSGLV).

This sequence belongs to the NqrDE/RnfAE family. The complex is composed of six subunits: RsxA, RsxB, RsxC, RsxD, RsxE and RsxG.

The protein resides in the cell inner membrane. In terms of biological role, part of a membrane-bound complex that couples electron transfer with translocation of ions across the membrane. Required to maintain the reduced state of SoxR. The chain is Ion-translocating oxidoreductase complex subunit A from Escherichia coli O45:K1 (strain S88 / ExPEC).